The chain runs to 178 residues: uncharacterized protein (178 aa).

It belongs to the mimivirus L39/R874 family.

This is an uncharacterized protein from Acanthamoeba polyphaga (Amoeba).